The chain runs to 351 residues: Nuclear inhibitor of protein phosphatase 1 (351 aa).

An interaction with CDC5L, SF3B1 and MELK region spans residues 1–142 (MAAAVNSGSS…LPSAVKGDEK (142 aa)). The FHA domain occupies 49–101 (YLFGRNPDLCDFTIDHQSCSRVHAALVYHKHLKRVFLIDLNSTHGTFLGHIRL). The interval 143–224 (MGGEDDELKG…VDPSVGRFRN (82 aa)) is interaction with EED. At threonine 161 the chain carries Phosphothreonine. A phosphoserine mark is found at serine 178 and serine 199. Short sequence motifs (nuclear localization signal) lie at residues 185-209 (GNLDIQRPKRKRKNSRVTFSEDDEI) and 210-240 (INPEDVDPSVGRFRNMVQTAVVPVKKKRMEG). The involved in PP-1 inhibition stretch occupies residues 191–200 (RPKRKRKNSR). The involved in PP-1 binding stretch occupies residues 200–203 (RVTF). Position 204 is a phosphoserine (serine 204). Position 249 is a phosphoserine (serine 249). The residue at position 264 (tyrosine 264) is a Phosphotyrosine. The tract at residues 310–329 (AVAINPTPNPAVYNPEAVNE) is interaction with EED. The disordered stretch occupies residues 314–351 (NPTPNPAVYNPEAVNEPKKKKYAKEAWPGKKPTPSLLI). The segment at 330 to 351 (PKKKKYAKEAWPGKKPTPSLLI) is RNA-binding. Residues 331-337 (KKKKYAK) are involved in PP-1 inhibition. Residue tyrosine 335 is modified to Phosphotyrosine.

Interacts with phosphorylated CDC5L, SF3B1 and MELK. Part of the spliceosome. Interacts with PPP1CA, PPP1CB and PPP1CC. Interacts with EED. Part of a complex consisting of PPP1R8, EED, HDAC2 and PP-1. In terms of processing, may be inactivated by phosphorylation on Ser-199 or Ser-204.

It localises to the nucleus. The protein resides in the nucleus speckle. Functionally, inhibitor subunit of the major nuclear protein phosphatase-1 (PP-1). It has RNA-binding activity but does not cleave RNA and may target PP-1 to RNA-associated substrates. May also be involved in pre-mRNA splicing. Binds DNA and might act as a transcriptional repressor. Essential for cell proliferation and early embryonic development. The sequence is that of Nuclear inhibitor of protein phosphatase 1 (Ppp1r8) from Mus musculus (Mouse).